The following is a 152-amino-acid chain: Ribosome maturation factor RimP (152 aa).

The protein belongs to the RimP family.

It is found in the cytoplasm. Required for maturation of 30S ribosomal subunits. The chain is Ribosome maturation factor RimP from Fervidobacterium nodosum (strain ATCC 35602 / DSM 5306 / Rt17-B1).